Reading from the N-terminus, the 137-residue chain is Venom allergen 4 (137 aa).

The N-terminal stretch at 1-19 is a signal peptide; sequence MKTFVLVSCLLVFTQIIYA.

This sequence belongs to the ant venom allergen 2/4 family. In terms of assembly, monomer. As to expression, expressed by the venom gland.

The protein resides in the secreted. This is Venom allergen 4 from Solenopsis invicta (Red imported fire ant).